We begin with the raw amino-acid sequence, 477 residues long: MVNTMKTKLLCVLLLCGAVFSLPRQETYRQLARGSRAYGVACRDEKTQMIYQQQESWLRPEVRSKRVEHCRCDRGLAQCHTVPVKSCSELRCFNGGTCWQAASFSDFVCQCPKGYTGKQCEVDTHATCYKDQGVTYRGTWSTSESGAQCINWNSNLLTRRTYNGRRSDAITLGLGNHNYCRNPDNNSKPWCYVIKASKFILEFCSVPVCSKATCGLRKYKEPQLHSTGGLFTDITSHPWQAAIFAQNRRSSGERFLCGGILISSCWVLTAAHCFQERYPPQHLRVVLGRTYRVKPGKEEQTFEVEKCIVHEEFDDDTYNNDIALLQLKSGSPQCAQESDSVRAICLPEANLQLPDWTECELSGYGKHKSSSPFYSEQLKEGHVRLYPSSRCTSKFLFNKTVTNNMLCAGDTRSGEIYPNVHDACQGDSGGPLVCMNDNHMTLLGIISWGVGCGEKDIPGVYTKVTNYLGWIRDNMRP.

The N-terminal stretch at Met1–Arg36 is a signal peptide. Residues Val40 to Val82 form the Fibronectin type-I domain. Intrachain disulfides connect Cys42–Cys72, Cys70–Cys79, Cys87–Cys98, Cys92–Cys109, Cys111–Cys120, Cys128–Cys209, Cys149–Cys191, Cys180–Cys204, Cys214–Cys345, Cys257–Cys273, Cys265–Cys334, Cys359–Cys434, Cys391–Cys407, and Cys424–Cys452. The EGF-like domain maps to Pro83–Glu121. The Kringle domain occupies Cys128–Cys209. Asn185 carries N-linked (GlcNAc...) asparagine glycosylation. The region spanning Ser226–Arg476 is the Peptidase S1 domain. Residues His272 and Asp321 each act as charge relay system in the active site. Residue Asn398 is glycosylated (N-linked (GlcNAc...) asparagine). The Charge relay system role is filled by Ser428.

The protein belongs to the peptidase S1 family. In terms of assembly, monomer.

It is found in the secreted. It carries out the reaction Specific cleavage of Arg-|-Val bond in plasminogen to form plasmin.. Its activity is regulated as follows. Activity toward plasminogen is stimulated in the presence of fibrin I. Functionally, probably essential to support the feeding habits of this exclusively haematophagous animal. Probable potent thrombolytic agent. The sequence is that of Salivary plasminogen activator alpha 2 from Desmodus rotundus (Vampire bat).